Reading from the N-terminus, the 291-residue chain is MAEQKKQLLIVTGMSGAGKTVAIKALEDMGYFVVDNLPPELLGSFWELINNSSDFSKAAVVVDLRVKSFYKDLVDEIKSLEDSQNVQSTVLFLDASDDVLVSRYKETRRLPPLAHTGRLLDGIQEERNILSRTKNISNIIIDTSHLSTKELKTKLVDKFGDNRTRTFSIEVMSFGFKYGIPIDADIVMDVRFLPNPFYIPQLKPFTGLDRRVFDYVMSKKETKEFYAKFLDMLETAIPGYIAEGKEKLTIAIGCTGGQHRSVSIARQLAVDLAKKYPVDISHREISRYIGQ.

13 to 20 (GMSGAGKT) contributes to the ATP binding site. 63 to 66 (DLRV) provides a ligand contact to GTP.

It belongs to the RapZ-like family.

Displays ATPase and GTPase activities. The chain is Nucleotide-binding protein LJ_0866 from Lactobacillus johnsonii (strain CNCM I-12250 / La1 / NCC 533).